We begin with the raw amino-acid sequence, 481 residues long: Zinc finger CCCH domain-containing protein 4 (481 aa).

Residues 157–184 (RNRAHVCSFFIRGECTRGAECPYRHEMP) form a C3H1-type zinc finger. Positions 228–301 (KTLYVGGLNS…QRLKLTWGRP (74 aa)) constitute an RRM domain. The disordered stretch occupies residues 329–481 (HNQPPPMQQY…DVSTATGSSQ (153 aa)). Positions 331–345 (QPPPMQQYYMHPPPA) are enriched in pro residues. Composition is skewed to low complexity over residues 369–389 (AGGS…MPPH) and 399–410 (YMPSPYQQQYPP). The span at 423–444 (APPPAAYPYPQQPGPGSRPAPS) shows a compositional bias: pro residues. Residues 449–471 (SAISPDSAPAGSGAPSGSSQQAP) show a composition bias toward low complexity. Residues 472–481 (DVSTATGSSQ) show a composition bias toward polar residues.

The protein is Zinc finger CCCH domain-containing protein 4 of Arabidopsis thaliana (Mouse-ear cress).